A 142-amino-acid chain; its full sequence is MSTFTAKNETVQRDWYLVDAEGKTLGRLCTELARRLRGKHKPVYTPHVDTGDYLVVINAEKIVVTGKKLQDKMYHRFTGYIGNLKTESLAQALERHPERVIETAVKGMLPKGPLGRQMYRKLKVYAGTEHPHAAQQPQVLDI.

The protein belongs to the universal ribosomal protein uL13 family. In terms of assembly, part of the 50S ribosomal subunit.

Its function is as follows. This protein is one of the early assembly proteins of the 50S ribosomal subunit, although it is not seen to bind rRNA by itself. It is important during the early stages of 50S assembly. This Stenotrophomonas maltophilia (strain R551-3) protein is Large ribosomal subunit protein uL13.